We begin with the raw amino-acid sequence, 128 residues long: Azurin (128 aa).

The Plastocyanin-like domain maps to 1-128 (ACDVSIEGND…IMKGTIELGS (128 aa)). Cys-2 and Cys-25 are joined by a disulfide. The Cu cation site is built by His-45, Cys-111, His-116, and Met-120.

In terms of assembly, monomer. Interacts with the AAUA/AAUB heterotetramer complex. Requires Cu cation as cofactor.

Its subcellular location is the periplasm. In terms of biological role, transfers electrons from cytochrome c551 to cytochrome oxidase. Transfers electrons from the tryptophan tryptophylquinone of the aromatic amine dehydrogenase heterotetramer. The polypeptide is Azurin (Alcaligenes faecalis).